The primary structure comprises 573 residues: SHC-transforming protein 2 (573 aa).

A PID domain is found at 125–307 (LGPGVSYIVR…TGLEESAWGD (183 aa)). The SH2 domain occupies 478 to 569 (WYHGRMSRRA…ESELHLRGVV (92 aa)).

In terms of assembly, interacts with the Trk receptors in a phosphotyrosine-dependent manner and MEGF12. Once activated, binds to GRB2. In terms of processing, phosphorylated on tyrosine by the Trk receptors.

Its function is as follows. Signaling adapter that couples activated growth factor receptors to signaling pathway in neurons. Involved in the signal transduction pathways of neurotrophin-activated Trk receptors in cortical neurons. The chain is SHC-transforming protein 2 (Shc2) from Rattus norvegicus (Rat).